A 500-amino-acid chain; its full sequence is Pentatricopeptide repeat-containing protein At1g05750, chloroplastic (500 aa).

A chloroplast-targeting transit peptide spans 1-54 (MGLLPVVGITSPALITHKNHANPKIQRHNQSTSETTVSWTSRINLLTRNGRLAE). PPR repeat units lie at residues 35–69 (TTVS…GVEP), 70–106 (NHIT…GLDR), 108–138 (HVMV…MEDK), 139–173 (NSVT…DLIS), 174–204 (WTAM…GVKP), 205–239 (DYVA…DFKN), 240–270 (NVRV…MEKR), 271–305 (TVVS…GFKP), 306–336 (DAVT…MKCD), and 342–376 (RIEH…PNEV). Positions 377-453 (VIGSLLAACS…QPGFSSIEID (77 aa)) are type E motif. A type E(+) motif region spans residues 454-484 (DCMHVFMAGDNAHVETTYIREVLELISSDLR).

It belongs to the PPR family. PCMP-E subfamily.

The protein localises to the plastid. It is found in the chloroplast. This is Pentatricopeptide repeat-containing protein At1g05750, chloroplastic (PDE247) from Arabidopsis thaliana (Mouse-ear cress).